The primary structure comprises 156 residues: Transcription elongation factor GreA 1 (156 aa).

Positions 43–74 (RSENAEYSSAKRDLGRLESRLRYLNKQLQYAQ) form a coiled coil.

It belongs to the GreA/GreB family.

In terms of biological role, necessary for efficient RNA polymerase transcription elongation past template-encoded arresting sites. The arresting sites in DNA have the property of trapping a certain fraction of elongating RNA polymerases that pass through, resulting in locked ternary complexes. Cleavage of the nascent transcript by cleavage factors such as GreA or GreB allows the resumption of elongation from the new 3'terminus. GreA releases sequences of 2 to 3 nucleotides. This chain is Transcription elongation factor GreA 1, found in Lactiplantibacillus plantarum (strain ATCC BAA-793 / NCIMB 8826 / WCFS1) (Lactobacillus plantarum).